The sequence spans 149 residues: Large ribosomal subunit protein uL15 (149 aa).

Residues 1 to 64 are disordered; that stretch reads MVELHDLQPH…GQTPLYMRIP (64 aa). The span at 31–40 shows a compositional bias: basic residues; sequence TAGRGHKGQK.

The protein belongs to the universal ribosomal protein uL15 family. Part of the 50S ribosomal subunit.

Its function is as follows. Binds to the 23S rRNA. The sequence is that of Large ribosomal subunit protein uL15 from Aquifex aeolicus (strain VF5).